The sequence spans 112 residues: MDPVDPEMPPWHHPGSKPQTPCNNCYCKRCCYHCYVCFTKKGLGISHGRKKRRRPAAAASYPDNKDPVPEQHTGRKQKRQEEQEKKVEKETGPSGQPCHQDSCNSCTRISGQ.

The segment at 1–24 (MDPVDPEMPPWHHPGSKPQTPCNN) is interaction with human CREBBP. The segment at 1 to 48 (MDPVDPEMPPWHHPGSKPQTPCNNCYCKRCCYHCYVCFTKKGLGISHG) is transactivation. Positions 22, 25, and 27 each coordinate Zn(2+). The tract at residues 22–37 (CNNCYCKRCCYHCYVC) is cysteine-rich. K28 carries the N6-acetyllysine; by host PCAF modification. Positions 30, 33, 34, and 37 each coordinate Zn(2+). Residues 38 to 48 (FTKKGLGISHG) are core. Positions 45-112 (ISHGRKKRRR…CNSCTRISGQ (68 aa)) are disordered. The short motif at 49 to 56 (RKKRRRPA) is the Nuclear localization signal, RNA-binding (TAR), and protein transduction element. An interaction with the host capping enzyme RNGTT region spans residues 49 to 82 (RKKRRRPAAAASYPDNKDPVPEQHTGRKQKRQEE). K50 and K51 each carry N6-acetyllysine; by host EP300 and GCN5L2. Residues R52 and R53 each carry the asymmetric dimethylarginine; by host PRMT6 modification. Positions 63 to 91 (DNKDPVPEQHTGRKQKRQEEQEKKVEKET) are enriched in basic and acidic residues. Residues 93–112 (PSGQPCHQDSCNSCTRISGQ) show a composition bias toward polar residues.

This sequence belongs to the lentiviruses Tat family. Interacts with host CCNT1. Associates with the P-TEFb complex composed at least of Tat, P-TEFb (CDK9 and CCNT1), TAR RNA, RNA Pol II. Recruits the HATs CREBBP, TAF1/TFIID, EP300, PCAF and GCN5L2. Interacts with host KAT5/Tip60; this interaction targets the latter to degradation. Interacts with the host deacetylase SIRT1. Interacts with host capping enzyme RNGTT; this interaction stimulates RNGTT. Binds to host KDR, and to the host integrins ITGAV/ITGB3 and ITGA5/ITGB1. Interacts with host KPNB1/importin beta-1 without previous binding to KPNA1/importin alpha-1. Interacts with EIF2AK2. Interacts with host nucleosome assembly protein NAP1L1; this interaction may be required for the transport of Tat within the nucleus, since the two proteins interact at the nuclear rim. Interacts with host C1QBP/SF2P32; this interaction involves lysine-acetylated Tat. Interacts with the host chemokine receptors CCR2, CCR3 and CXCR4. Interacts with host DPP4/CD26; this interaction may trigger an anti-proliferative effect. Interacts with host LDLR. Interacts with the host extracellular matrix metalloproteinase MMP1. Interacts with host PRMT6; this interaction mediates Tat's methylation. Interacts with, and is ubiquitinated by MDM2/Hdm2. Interacts with host PSMC3 and HTATIP2. Interacts with STAB1; this interaction may overcome SATB1-mediated repression of IL2 and IL2RA (interleukin) in T cells by binding to the same domain than HDAC1. Interacts (when acetylated) with human CDK13, thereby increasing HIV-1 mRNA splicing and promoting the production of the doubly spliced HIV-1 protein Nef. Interacts with host TBP; this interaction modulates the activity of transcriptional pre-initiation complex. Interacts with host RELA. Interacts with host PLSCR1; this interaction negatively regulates Tat transactivation activity by altering its subcellular distribution. Asymmetrical arginine methylation by host PRMT6 seems to diminish the transactivation capacity of Tat and affects the interaction with host CCNT1. In terms of processing, acetylation by EP300, CREBBP, GCN5L2/GCN5 and PCAF regulates the transactivation activity of Tat. EP300-mediated acetylation of Lys-50 promotes dissociation of Tat from the TAR RNA through the competitive binding to PCAF's bromodomain. In addition, the non-acetylated Tat's N-terminus can also interact with PCAF. PCAF-mediated acetylation of Lys-28 enhances Tat's binding to CCNT1. Lys-50 is deacetylated by SIRT1. Post-translationally, polyubiquitination by host MDM2 does not target Tat to degradation, but activates its transactivation function and fosters interaction with CCNT1 and TAR RNA. Phosphorylated by EIF2AK2 on serine and threonine residues adjacent to the basic region important for TAR RNA binding and function. Phosphorylation of Tat by EIF2AK2 is dependent on the prior activation of EIF2AK2 by dsRNA.

The protein resides in the host nucleus. Its subcellular location is the host nucleolus. The protein localises to the host cytoplasm. It is found in the secreted. Transcriptional activator that increases RNA Pol II processivity, thereby increasing the level of full-length viral transcripts. Recognizes a hairpin structure at the 5'-LTR of the nascent viral mRNAs referred to as the transactivation responsive RNA element (TAR) and recruits the cyclin T1-CDK9 complex (P-TEFb complex) that will in turn hyperphosphorylate the RNA polymerase II to allow efficient elongation. The CDK9 component of P-TEFb and other Tat-activated kinases hyperphosphorylate the C-terminus of RNA Pol II that becomes stabilized and much more processive. Other factors such as HTATSF1/Tat-SF1, SUPT5H/SPT5, and HTATIP2 are also important for Tat's function. Besides its effect on RNA Pol II processivity, Tat induces chromatin remodeling of proviral genes by recruiting the histone acetyltransferases (HATs) CREBBP, EP300 and PCAF to the chromatin. This also contributes to the increase in proviral transcription rate, especially when the provirus integrates in transcriptionally silent region of the host genome. To ensure maximal activation of the LTR, Tat mediates nuclear translocation of NF-kappa-B by interacting with host RELA. Through its interaction with host TBP, Tat may also modulate transcription initiation. Tat can reactivate a latently infected cell by penetrating in it and transactivating its LTR promoter. In the cytoplasm, Tat is thought to act as a translational activator of HIV-1 mRNAs. Functionally, extracellular circulating Tat can be endocytosed by surrounding uninfected cells via the binding to several surface receptors such as CD26, CXCR4, heparan sulfate proteoglycans (HSPG) or LDLR. Neurons are rarely infected, but they internalize Tat via their LDLR. Through its interaction with nuclear HATs, Tat is potentially able to control the acetylation-dependent cellular gene expression. Modulates the expression of many cellular genes involved in cell survival, proliferation or in coding for cytokines or cytokine receptors. Tat plays a role in T-cell and neurons apoptosis. Tat induced neurotoxicity and apoptosis probably contribute to neuroAIDS. Circulating Tat also acts as a chemokine-like and/or growth factor-like molecule that binds to specific receptors on the surface of the cells, affecting many cellular pathways. In the vascular system, Tat binds to ITGAV/ITGB3 and ITGA5/ITGB1 integrins dimers at the surface of endothelial cells and competes with bFGF for heparin-binding sites, leading to an excess of soluble bFGF. In Homo sapiens (Human), this protein is Protein Tat.